The sequence spans 754 residues: C2H2 finger domain transcription factor crzA (754 aa).

Disordered stretches follow at residues Met1–Gly51, Ser63–Leu150, Val187–Thr227, Gln269–Val299, and Gly384–Lys543. Positions His30–Gln44 are enriched in low complexity. Polar residues-rich tracts occupy residues Ser63 to Ala80 and Thr94 to Gly114. Over residues Gln130–Gln140 the composition is skewed to low complexity. Positions Pro141 to Leu150 are enriched in polar residues. Residues Gln189 to Pro209 are compositionally biased toward low complexity. Polar residues-rich tracts occupy residues Leu210 to Thr227 and Ser279 to His293. 2 stretches are compositionally biased toward low complexity: residues Ser459–Leu472 and Arg491–Ser515. C2H2-type zinc fingers lie at residues Phe548–His570 and Phe576–His598. The C2H2-type 3; degenerate zinc-finger motif lies at Phe604–Glu635. Positions Ala708–Leu737 are disordered.

It is found in the nucleus. The protein localises to the cytoplasm. Transcription factor involved in the regulation of calcium ion homeostasis. Regulates genes encoding calcium transporters, transcription factors and genes that could be directly or indirectly involved in calcium metabolism. Supports especially pmcA, pmcB and pmcC expression encoding for calcium-translocating P-type ATPases. Binds target promoters at motif A[GT][CG]CA[AC][AG]. Plays an essential role germination, radial growth, and asexual development. Also plays a major role in proper chitin and glucan incorporation into the cell wall. Involved in the high-osmolarity glycerol response (HOG) signaling pathway. Required for pathogenicity in an experimental murine model of invasive pulmonary aspergillosis. The sequence is that of C2H2 finger domain transcription factor crzA from Aspergillus fumigatus (strain ATCC MYA-4609 / CBS 101355 / FGSC A1100 / Af293) (Neosartorya fumigata).